The primary structure comprises 197 residues: Imidazoleglycerol-phosphate dehydratase (197 aa).

This sequence belongs to the imidazoleglycerol-phosphate dehydratase family.

The protein resides in the cytoplasm. It carries out the reaction D-erythro-1-(imidazol-4-yl)glycerol 3-phosphate = 3-(imidazol-4-yl)-2-oxopropyl phosphate + H2O. It functions in the pathway amino-acid biosynthesis; L-histidine biosynthesis; L-histidine from 5-phospho-alpha-D-ribose 1-diphosphate: step 6/9. This Azotobacter vinelandii (strain DJ / ATCC BAA-1303) protein is Imidazoleglycerol-phosphate dehydratase.